The following is a 142-amino-acid chain: MTRILATGTFDILHPGHLYYLEQARKYGNELYVLVARDSTIEHKPKPIVPEKQRLEMVKALRVVDHALLGSEEDMFKPLKEVQPDIIVLGHDQVFDEKELEDKLQKRGFNTKVVRLGKPHQCTLCSSGRIIKRILERKRTEL.

Residues 9-10 (TF), 14-17 (HPGH), and aspartate 92 contribute to the ATP site.

Belongs to the archaeal FAD synthase family. As to quaternary structure, homodimer. A divalent metal cation serves as cofactor.

The enzyme catalyses FMN + ATP + H(+) = FAD + diphosphate. It participates in cofactor biosynthesis; FAD biosynthesis; FAD from FMN: step 1/1. Its function is as follows. Catalyzes the transfer of the AMP portion of ATP to flavin mononucleotide (FMN) to produce flavin adenine dinucleotide (FAD) coenzyme. The chain is FAD synthase from Methanohalophilus mahii (strain ATCC 35705 / DSM 5219 / SLP).